Consider the following 418-residue polypeptide: Secreted beta-glucosidase SUN41 (418 aa).

A signal peptide spans 1–23; the sequence is MRFSQATVLAFAALSLAAPAFEA. Residues 81-97 are compositionally biased toward low complexity; sequence SEETSSTSTSISSTTTI. Positions 81-150 are disordered; the sequence is SEETSSTSTS…SGSTNGIEGD (70 aa). N-linked (GlcNAc...) asparagine glycosylation occurs at asparagine 100. Over residues 112–126 the composition is skewed to polar residues; the sequence is SLPSGTIKPSSFATE. Positions 127 to 136 are enriched in low complexity; sequence SQSQSQSSST.

The protein belongs to the SUN family. In terms of processing, predicted to be a substrate for cleavage by KEX2.

The protein localises to the secreted. It is found in the cell wall. Functionally, cell surface beta-glucosidase involved in cytokinesis, cell wall biogenesis, adhesion to host tissue, and biofilm formation; thus playing an important role in the host-pathogen interaction. Has hydrolytic activity on linear (1-&gt;3)-beta-D-glucans such as laminaribiose and other laminarioligosaccharides. In Candida albicans (strain SC5314 / ATCC MYA-2876) (Yeast), this protein is Secreted beta-glucosidase SUN41.